Reading from the N-terminus, the 339-residue chain is Probable cytosolic iron-sulfur protein assembly protein CIAO1 (339 aa).

WD repeat units follow at residues 14 to 53 (HPDS…WICK), 59 to 98 (GHQR…FECV), 103 to 142 (GHEN…EYEC), 148 to 187 (SHTQ…WVCC), 192 to 231 (GHES…NEQG), 250 to 289 (FHSR…DPQQ), and 301 to 339 (AHSQ…SEGI). Positions 176 to 178 (LYR) match the LYR motif; required for interaction with HSC20 motif.

Belongs to the WD repeat CIA1 family. In terms of assembly, component of the CIA complex. Interacts with CIAO2A and forms a complex with CIAO2B and MMS19; the interactions with CIAO2A and CIAO2B are mutually exclusive. Interacts with CHD1L, ERCC2, IREB2 and POLD1. Component of the MMXD complex, which includes CIAO1, ERCC2, CIAO2B, MMS19 and SLC25A5. Interacts with WT1. Interacts with CIAO3. Interacts (via LYR motif) with HSC20.

The protein localises to the cytoplasm. Key component of the cytosolic iron-sulfur protein assembly (CIA) complex, a multiprotein complex that mediates the incorporation of iron-sulfur cluster into extramitochondrial Fe/S proteins. As a CIA complex component, interacts specifically with CIAO2A or CIAO2B and MMS19 to assist different branches of iron-sulfur protein assembly, depending of its interactors. The complex CIAO1:CIAO2B:MMS19 binds to and facilitates the assembly of most cytosolic-nuclear Fe/S proteins. CIAO1:CIAO2A specifically matures ACO1 and stabilizes IREB2. Seems to specifically modulate the transactivation activity of WT1. As part of the mitotic spindle-associated MMXD complex it may play a role in chromosome segregation. The polypeptide is Probable cytosolic iron-sulfur protein assembly protein CIAO1 (Bos taurus (Bovine)).